Here is a 511-residue protein sequence, read N- to C-terminus: NADH-quinone oxidoreductase subunit N 1 (511 aa).

Helical transmembrane passes span 15–35 (LALP…LDLV), 46–66 (ALAL…WQAV), 89–109 (FAIY…LMSI), 120–140 (GEYH…ASGM), 142–162 (LILL…LVGF), 177–197 (LLLG…FYGL), 221–241 (PIAL…IAAV), 264–284 (VAVK…MLWP), 289–309 (YTPI…FAAL), 317–337 (LLAY…VASD), 347–367 (GILV…AVIT), 393–413 (AVLL…AGFW), 426–446 (GHYT…YYYL), and 471–491 (AALW…EVFL).

Belongs to the complex I subunit 2 family. As to quaternary structure, NDH-1 is composed of 14 different subunits. Subunits NuoA, H, J, K, L, M, N constitute the membrane sector of the complex.

It localises to the cell inner membrane. The catalysed reaction is a quinone + NADH + 5 H(+)(in) = a quinol + NAD(+) + 4 H(+)(out). NDH-1 shuttles electrons from NADH, via FMN and iron-sulfur (Fe-S) centers, to quinones in the respiratory chain. The immediate electron acceptor for the enzyme in this species is believed to be ubiquinone. Couples the redox reaction to proton translocation (for every two electrons transferred, four hydrogen ions are translocated across the cytoplasmic membrane), and thus conserves the redox energy in a proton gradient. This chain is NADH-quinone oxidoreductase subunit N 1, found in Koribacter versatilis (strain Ellin345).